Reading from the N-terminus, the 229-residue chain is Demethylmenaquinone methyltransferase (229 aa).

Residues Thr-58, Asp-78, and 100–101 contribute to the S-adenosyl-L-methionine site; that span reads DA.

This sequence belongs to the class I-like SAM-binding methyltransferase superfamily. MenG/UbiE family.

It catalyses the reaction a 2-demethylmenaquinol + S-adenosyl-L-methionine = a menaquinol + S-adenosyl-L-homocysteine + H(+). The protein operates within quinol/quinone metabolism; menaquinone biosynthesis; menaquinol from 1,4-dihydroxy-2-naphthoate: step 2/2. Its function is as follows. Methyltransferase required for the conversion of demethylmenaquinol (DMKH2) to menaquinol (MKH2). The protein is Demethylmenaquinone methyltransferase of Thermotoga maritima (strain ATCC 43589 / DSM 3109 / JCM 10099 / NBRC 100826 / MSB8).